Consider the following 939-residue polypeptide: MTESKNSFNAKSTLEVGDKSYDYFALSAVPGMEKLPYSLKVLGENLLRTEDGANITNEHIEAIANWDASSDPSIEIQFTPARVLMQDFTGVPCVVDLATMREAVAALGGDPNDVNPLNPAEMVIDHSVIVEAFGRPDALAKNVEIEYERNEERYQFLRWGSESFSNFRVVPPGTGIVHQVNIEYLARVVFDNEGLAYPDTCIGTDSHTTMENGLGILGWGVGGIEAEAAMLGQPVSMLIPRVVGFKLTGEIPVGVTATDVVLTITEMLRDHGVVQKFVEFYGSGVKAVPLANRATIGNMSPEFGSTCAMFPIDEETTKYLRLTGRPEEQVALVEAYAKAQGMWLDEDTVEAEYSEYLELDLSTVVPSIAGPKRPQDRILLSEAKEQFRKDLPTYTDDAVSVDTSIPATRMVNEGGGQPEGGVEADNYNASWAGSGESLATGAEGRPSKPVTVASPQGGEYTIDHGMVAIASITSCTNTSNPSVMIGAGLIARKAAEKGLKSKPWVKTICAPGSQVVDGYYQRADLWKDLEAMGFYLSGFGCTTCIGNSGPLPEEISAAINEHDLTATAVLSGNRNFEGRISPDVKMNYLASPIMVIAYAIAGTMDFDFENEALGQDQDGNDVFLKDIWPSTEEIEDTIQQAISRELYEADYADVFKGDKQWQELDVPTGDTFEWDENSTYIRKAPYFDGMPVEPVAVTDIQGARVLAKLGDSVTTDHISPASSIKPGTPAAQYLDEHGVERHDYNSLGSRRGNHEVMMRGTFANIRLQNQLVDIAGGYTRDFTQEGAPQAFIYDASVNYKAAGIPLVVLGGKEYGTGSSRDWAAKGTNLLGIRAVITESFERIHRSNLIGMGVVPLQFPAGESHESLGLDGTETFDITGLTALNEGETPKTVKVTATKENGDVVEFDAVVRIDTPGEADYYRHGGILQYVLRQMAASSK.

The tract at residues 433-453 (GSGESLATGAEGRPSKPVTVA) is disordered. Residues Cys-475, Cys-541, and Cys-544 each contribute to the [4Fe-4S] cluster site.

Belongs to the aconitase/IPM isomerase family. In terms of assembly, monomer. [4Fe-4S] cluster serves as cofactor.

The catalysed reaction is citrate = D-threo-isocitrate. The enzyme catalyses (2S,3R)-3-hydroxybutane-1,2,3-tricarboxylate = 2-methyl-cis-aconitate + H2O. It functions in the pathway carbohydrate metabolism; tricarboxylic acid cycle; isocitrate from oxaloacetate: step 2/2. It participates in organic acid metabolism; propanoate degradation. Functionally, involved in the catabolism of short chain fatty acids (SCFA) via the tricarboxylic acid (TCA)(acetyl degradation route) and probably via the 2-methylcitrate cycle I (propionate degradation route). Catalyzes the reversible isomerization of citrate to isocitrate via cis-aconitate. Could catalyze the hydration of 2-methyl-cis-aconitate to yield (2R,3S)-2-methylisocitrate. The apo form of AcnA functions as a RNA-binding regulatory protein. The sequence is that of Aconitate hydratase A (acn) from Corynebacterium glutamicum (strain ATCC 13032 / DSM 20300 / JCM 1318 / BCRC 11384 / CCUG 27702 / LMG 3730 / NBRC 12168 / NCIMB 10025 / NRRL B-2784 / 534).